The following is a 326-amino-acid chain: Probable cell division protein WhiA (326 aa).

Residues 275-308 (SLEELGQLSDPPLTKDAVAGRIRRLLAMADKKAS) constitute a DNA-binding region (H-T-H motif).

This sequence belongs to the WhiA family.

In terms of biological role, involved in cell division and chromosome segregation. This Beutenbergia cavernae (strain ATCC BAA-8 / DSM 12333 / CCUG 43141 / JCM 11478 / NBRC 16432 / NCIMB 13614 / HKI 0122) protein is Probable cell division protein WhiA.